Reading from the N-terminus, the 182-residue chain is Peptide deformylase (182 aa).

Fe cation is bound by residues cysteine 110 and histidine 153. The active site involves glutamate 154. Histidine 157 is a Fe cation binding site.

This sequence belongs to the polypeptide deformylase family. The cofactor is Fe(2+).

It carries out the reaction N-terminal N-formyl-L-methionyl-[peptide] + H2O = N-terminal L-methionyl-[peptide] + formate. Its function is as follows. Removes the formyl group from the N-terminal Met of newly synthesized proteins. Requires at least a dipeptide for an efficient rate of reaction. N-terminal L-methionine is a prerequisite for activity but the enzyme has broad specificity at other positions. The sequence is that of Peptide deformylase from Halalkalibacterium halodurans (strain ATCC BAA-125 / DSM 18197 / FERM 7344 / JCM 9153 / C-125) (Bacillus halodurans).